Consider the following 539-residue polypeptide: Acid-sensing ion channel 4 (539 aa).

Residues 1 to 68 (MPIEIVCKIK…GPGPHGLRRT (68 aa)) are Cytoplasmic-facing. Residues 69-89 (LWALALLTSLAAFLYQAASLA) form a helical membrane-spanning segment. The Extracellular segment spans residues 90–438 (RGYLTRPHLV…EQQAAYGLSA (349 aa)). 2 cysteine pairs are disulfide-bonded: Cys-118/Cys-202 and Cys-180/Cys-187. N-linked (GlcNAc...) asparagine glycans are attached at residues Asn-191, Asn-243, Asn-341, and Asn-376. 5 disulfides stabilise this stretch: Cys-296-Cys-375, Cys-318-Cys-371, Cys-322-Cys-369, Cys-331-Cys-353, and Cys-333-Cys-345. The chain crosses the membrane as a helical span at residues 439–459 (LLGDLGGQMGLFIGASILTLL). The short motif at 452–454 (GAS) is the GAS motif; ion selectivity filter element. Residues 460-539 (EILDYIYEVS…PGSLFEDFAC (80 aa)) are Cytoplasmic-facing. The disordered stretch occupies residues 500–531 (KEQSPCPSRGRAEGGGASSLLPNHHHPHGPPG).

This sequence belongs to the amiloride-sensitive sodium channel (TC 1.A.6) family. ASIC4 subfamily. Homotrimer. Heterotrimer; with other ASIC proteins producing functional channels.

The protein localises to the cell membrane. Functionally, does not exhibit measurable stand-alone pH-gated sodium channel activity but may form pH-gated heterotrimeric sodium channels. Its activity could also depend on alternative gating mechanisms. The protein is Acid-sensing ion channel 4 of Mus musculus (Mouse).